We begin with the raw amino-acid sequence, 102 residues long: Small ribosomal subunit protein uS10 (102 aa).

Belongs to the universal ribosomal protein uS10 family. Part of the 30S ribosomal subunit.

Functionally, involved in the binding of tRNA to the ribosomes. The polypeptide is Small ribosomal subunit protein uS10 (Geotalea daltonii (strain DSM 22248 / JCM 15807 / FRC-32) (Geobacter daltonii)).